The primary structure comprises 119 residues: Putative F420H(2)-dependent quinone reductase Rv3178 (119 aa).

Coenzyme F420-(gamma-Glu)n is bound by residues 21–23, 27–32, 43–46, and 54–58; these read RKS, FVAPLL, VASA, and QWYRN.

Belongs to the F420H(2)-dependent quinone reductase family.

The protein resides in the cell membrane. The catalysed reaction is oxidized coenzyme F420-(gamma-L-Glu)(n) + a quinol + H(+) = reduced coenzyme F420-(gamma-L-Glu)(n) + a quinone. In terms of biological role, involved in a F420-dependent anti-oxidant mechanism that protects M.tuberculosis against oxidative stress and bactericidal agents. Catalyzes the F420H(2)-dependent two-electron reduction of quinones to dihydroquinones, thereby preventing the formation of cytotoxic semiquinones obtained by the one-electron reduction pathway. Since menaquinone is the sole quinone electron carrier in the respiratory chain in M.tuberculosis, the physiological electron acceptor for Fqr-mediated F420H(2) oxidation is therefore likely to be the endogenous menaquinone found in the membrane fraction of M.tuberculosis. The protein is Putative F420H(2)-dependent quinone reductase Rv3178 of Mycobacterium tuberculosis (strain ATCC 25618 / H37Rv).